The chain runs to 268 residues: Ribonuclease P protein subunit p30 (268 aa).

The residue at position 2 (Ala2) is an N-acetylalanine. Position 251 is a phosphoserine (Ser251).

Belongs to the eukaryotic/archaeal RNase P protein component 3 family. Component of nuclear RNase P and RNase MRP ribonucleoproteins. RNase P consists of a catalytic RNA moiety and about 10 protein subunits; POP1, POP4, POP5, POP7, RPP14, RPP21, RPP25, RPP30, RPP38 and RPP40. Within the RNase P complex, POP1, POP7 and RPP25 form the 'finger' subcomplex, POP5, RPP14, RPP40 and homodimeric RPP30 form the 'palm' subcomplex, and RPP21, POP4 and RPP38 form the 'wrist' subcomplex. All subunits of the RNase P complex interact with the catalytic RNA. Several subunits of RNase P are also part of the RNase MRP complex. RNase MRP consists of a catalytic RNA moiety and about 8 protein subunits; POP1, POP7, RPP25, RPP30, RPP38, RPP40 and possibly also POP4 and POP5.

Its subcellular location is the nucleus. The protein localises to the nucleolus. In terms of biological role, component of ribonuclease P, a ribonucleoprotein complex that generates mature tRNA molecules by cleaving their 5'-ends. Also a component of the MRP ribonuclease complex, which cleaves pre-rRNA sequences. This chain is Ribonuclease P protein subunit p30 (RPP30), found in Bos taurus (Bovine).